A 113-amino-acid chain; its full sequence is MHEVAIMTETVAIANAAAERQNATKIVGLTMRIGAISGVVPEALSFAFEAVAGGTLAEQAQLIIETVPVTCYCAQCDRPFTPPDLFYECPLCSSLSQHILSGKEVELKSLEVI.

Ni(2+) is bound at residue His-2. 4 residues coordinate Zn(2+): Cys-73, Cys-76, Cys-89, and Cys-92.

It belongs to the HypA/HybF family.

Functionally, involved in the maturation of [NiFe] hydrogenases. Required for nickel insertion into the metal center of the hydrogenase. The chain is Hydrogenase maturation factor HypA from Picosynechococcus sp. (strain ATCC 27264 / PCC 7002 / PR-6) (Agmenellum quadruplicatum).